The following is a 108-amino-acid chain: Nucleoid-associated protein PLES_37951 (108 aa).

2 disordered regions span residues 1–25 and 87–108; these read MMKG…KMQE and NQEK…KMPF. A compositionally biased stretch (polar residues) spans 87-98; sequence NQEKMSGFTSGM.

It belongs to the YbaB/EbfC family. Homodimer.

Its subcellular location is the cytoplasm. It localises to the nucleoid. In terms of biological role, binds to DNA and alters its conformation. May be involved in regulation of gene expression, nucleoid organization and DNA protection. The chain is Nucleoid-associated protein PLES_37951 from Pseudomonas aeruginosa (strain LESB58).